We begin with the raw amino-acid sequence, 165 residues long: Xanthine-guanine phosphoribosyltransferase (165 aa).

5-phospho-alpha-D-ribose 1-diphosphate contacts are provided by residues 41 to 42 (RG) and 98 to 106 (DDLTDTGKT). Asp-99 contacts Mg(2+). Guanine is bound by residues Asp-102 and Ile-145. Xanthine-binding residues include Asp-102 and Ile-145. Residues 102–106 (DTGKT) and 144–145 (WI) each bind GMP.

This sequence belongs to the purine/pyrimidine phosphoribosyltransferase family. XGPT subfamily. As to quaternary structure, homotetramer. Mg(2+) is required as a cofactor.

The protein resides in the cell inner membrane. It catalyses the reaction GMP + diphosphate = guanine + 5-phospho-alpha-D-ribose 1-diphosphate. The catalysed reaction is XMP + diphosphate = xanthine + 5-phospho-alpha-D-ribose 1-diphosphate. It carries out the reaction IMP + diphosphate = hypoxanthine + 5-phospho-alpha-D-ribose 1-diphosphate. The protein operates within purine metabolism; GMP biosynthesis via salvage pathway; GMP from guanine: step 1/1. It participates in purine metabolism; XMP biosynthesis via salvage pathway; XMP from xanthine: step 1/1. Its function is as follows. Purine salvage pathway enzyme that catalyzes the transfer of the ribosyl-5-phosphate group from 5-phospho-alpha-D-ribose 1-diphosphate (PRPP) to the N9 position of the 6-oxopurines guanine and xanthine to form the corresponding ribonucleotides GMP (guanosine 5'-monophosphate) and XMP (xanthosine 5'-monophosphate), with the release of PPi. To a lesser extent, also acts on hypoxanthine. The polypeptide is Xanthine-guanine phosphoribosyltransferase (Brucella suis (strain ATCC 23445 / NCTC 10510)).